Reading from the N-terminus, the 398-residue chain is Riboflavin biosynthesis protein RibBA (398 aa).

Residues Met1–Asn199 are DHBP synthase. D-ribulose 5-phosphate-binding positions include Arg26 to Glu27, Asp31, Arg138 to Thr142, and Glu162. Mg(2+) is bound at residue Glu27. Residue His141 participates in Mg(2+) binding. The segment at Leu200–Phe398 is GTP cyclohydrolase II. Arg251–Glu255 is a GTP binding site. Zn(2+)-binding residues include Cys256, Cys267, and Cys269. GTP-binding positions include Gln272, Glu294–Arg296, and Thr316. Asp328 functions as the Proton acceptor; for GTP cyclohydrolase activity in the catalytic mechanism. Arg330 functions as the Nucleophile; for GTP cyclohydrolase activity in the catalytic mechanism. Positions 351 and 356 each coordinate GTP.

This sequence in the N-terminal section; belongs to the DHBP synthase family. It in the C-terminal section; belongs to the GTP cyclohydrolase II family. It depends on Mg(2+) as a cofactor. Requires Mn(2+) as cofactor. The cofactor is Zn(2+).

It catalyses the reaction D-ribulose 5-phosphate = (2S)-2-hydroxy-3-oxobutyl phosphate + formate + H(+). It carries out the reaction GTP + 4 H2O = 2,5-diamino-6-hydroxy-4-(5-phosphoribosylamino)-pyrimidine + formate + 2 phosphate + 3 H(+). It participates in cofactor biosynthesis; riboflavin biosynthesis; 2-hydroxy-3-oxobutyl phosphate from D-ribulose 5-phosphate: step 1/1. The protein operates within cofactor biosynthesis; riboflavin biosynthesis; 5-amino-6-(D-ribitylamino)uracil from GTP: step 1/4. Catalyzes the conversion of D-ribulose 5-phosphate to formate and 3,4-dihydroxy-2-butanone 4-phosphate. In terms of biological role, catalyzes the conversion of GTP to 2,5-diamino-6-ribosylamino-4(3H)-pyrimidinone 5'-phosphate (DARP), formate and pyrophosphate. This is Riboflavin biosynthesis protein RibBA from Bacillus subtilis (strain 168).